We begin with the raw amino-acid sequence, 244 residues long: UPF0280 protein MJ1526 (244 aa).

This sequence belongs to the UPF0280 family.

In Methanocaldococcus jannaschii (strain ATCC 43067 / DSM 2661 / JAL-1 / JCM 10045 / NBRC 100440) (Methanococcus jannaschii), this protein is UPF0280 protein MJ1526.